The primary structure comprises 620 residues: Guanylate-binding protein 3 (620 aa).

The segment at 1-304 (MEAPICLVEN…NAINSGTVPC (304 aa)) is GTPase domain (Globular). In terms of domain architecture, GB1/RHD3-type G spans 29 to 271 (AQPLVVVAIV…FCSYIFTNGK (243 aa)). Residues 39–46 (GLYRTGKS), 61–63 (LGS), and 91–95 (DTEGL) contribute to the GTP site. 2 coiled-coil regions span residues 375–411 (KKLV…SESL) and 477–582 (DGER…TRRK).

This sequence belongs to the TRAFAC class dynamin-like GTPase superfamily. GB1/RHD3 GTPase family. GB1 subfamily. As to quaternary structure, heterodimer with other family members, including GBP1, GBP2 and GBP5. Dimerization regulates subcellular location. As to expression, brain, lung, heart, spleen, kidney, liver and intestine.

Its subcellular location is the cytoplasm. It localises to the perinuclear region. It is found in the golgi apparatus membrane. It catalyses the reaction GTP + H2O = GDP + phosphate + H(+). Functionally, interferon (IFN)-inducible GTPase that plays important roles in innate immunity against a diverse range of bacterial, viral and protozoan pathogens. Hydrolyzes GTP very efficiently; GDP rather than GMP is the major reaction product. Following infection, recruited to the pathogen-containing vacuoles or vacuole-escaped bacteria and acts as a positive regulator of inflammasome assembly by promoting the release of inflammasome ligands from bacteria. Acts by promoting lysis of pathogen-containing vacuoles, releasing pathogens into the cytosol. Following pathogen release in the cytosol, promotes recruitment of proteins that mediate bacterial cytolysis, such as Gm12250/Irgb10: this liberates ligands that are detected by inflammasomes, such as lipopolysaccharide (LPS) that activates the non-canonical CASP4/CASP11 inflammasome or double-stranded DNA (dsDNA) that activates the AIM2 inflammasome. May play a role in erythroid differentiation. In Mus musculus (Mouse), this protein is Guanylate-binding protein 3.